A 393-amino-acid polypeptide reads, in one-letter code: NAD(P)H-quinone oxidoreductase subunit H, chloroplastic (393 aa).

Belongs to the complex I 49 kDa subunit family. NDH is composed of at least 16 different subunits, 5 of which are encoded in the nucleus.

It localises to the plastid. The protein resides in the chloroplast thylakoid membrane. The enzyme catalyses a plastoquinone + NADH + (n+1) H(+)(in) = a plastoquinol + NAD(+) + n H(+)(out). The catalysed reaction is a plastoquinone + NADPH + (n+1) H(+)(in) = a plastoquinol + NADP(+) + n H(+)(out). Its function is as follows. NDH shuttles electrons from NAD(P)H:plastoquinone, via FMN and iron-sulfur (Fe-S) centers, to quinones in the photosynthetic chain and possibly in a chloroplast respiratory chain. The immediate electron acceptor for the enzyme in this species is believed to be plastoquinone. Couples the redox reaction to proton translocation, and thus conserves the redox energy in a proton gradient. The polypeptide is NAD(P)H-quinone oxidoreductase subunit H, chloroplastic (Nicotiana sylvestris (Wood tobacco)).